Here is a 440-residue protein sequence, read N- to C-terminus: Glutamyl-tRNA reductase (440 aa).

Residues 47 to 50, Ser110, 115 to 117, and Gln121 contribute to the substrate site; these read TCNR and ERE. Cys48 functions as the Nucleophile in the catalytic mechanism. An NADP(+)-binding site is contributed by 192 to 197; it reads GTGAYA.

Belongs to the glutamyl-tRNA reductase family. Homodimer.

The catalysed reaction is (S)-4-amino-5-oxopentanoate + tRNA(Glu) + NADP(+) = L-glutamyl-tRNA(Glu) + NADPH + H(+). It functions in the pathway porphyrin-containing compound metabolism; protoporphyrin-IX biosynthesis; 5-aminolevulinate from L-glutamyl-tRNA(Glu): step 1/2. Catalyzes the NADPH-dependent reduction of glutamyl-tRNA(Glu) to glutamate 1-semialdehyde (GSA). The polypeptide is Glutamyl-tRNA reductase (Paenarthrobacter aurescens (strain TC1)).